The following is a 646-amino-acid chain: Acetyl-coenzyme A synthetase (646 aa).

Residues 189 to 192, T307, and N331 contribute to the CoA site; that span reads RGPK. ATP is bound by residues 383–385, 407–412, D496, and R511; these read GEP and DTWWQT. S519 contacts CoA. R522 serves as a coordination point for ATP. V533, H535, and V538 together coordinate Mg(2+). Residue R580 coordinates CoA. N6-acetyllysine is present on K605.

It belongs to the ATP-dependent AMP-binding enzyme family. The cofactor is Mg(2+). Post-translationally, acetylated. Deacetylation by the SIR2-homolog deacetylase activates the enzyme.

It catalyses the reaction acetate + ATP + CoA = acetyl-CoA + AMP + diphosphate. Functionally, catalyzes the conversion of acetate into acetyl-CoA (AcCoA), an essential intermediate at the junction of anabolic and catabolic pathways. AcsA undergoes a two-step reaction. In the first half reaction, AcsA combines acetate with ATP to form acetyl-adenylate (AcAMP) intermediate. In the second half reaction, it can then transfer the acetyl group from AcAMP to the sulfhydryl group of CoA, forming the product AcCoA. The polypeptide is Acetyl-coenzyme A synthetase (Desulfatibacillum aliphaticivorans).